Consider the following 995-residue polypeptide: Probable copper-transporting ATPase HMA5 (995 aa).

Residues 1-299 (MATKLLSLTC…QGEIKQYYKS (299 aa)) are Cytoplasmic-facing. HMA domains are found at residues 51 to 117 (SRAV…FEAS) and 129 to 195 (QVCR…FEAV). 4 residues coordinate Cu(+): cysteine 62, cysteine 65, cysteine 140, and cysteine 143. Residues 204–270 (SKIDLKIDGE…VIESTVFGHS (67 aa)) form the HMA 3; degenerate domain. Residues 300 to 321 (FLWSLVFTVPVFLTAMVFMYIP) form a helical membrane-spanning segment. At 322–340 (GIKDLLMFKVINMLTVGEI) the chain is on the extracellular side. Residues 341 to 360 (IRCVLATPVQFVIGWRFYTG) form a helical membrane-spanning segment. The Cytoplasmic portion of the chain corresponds to 361–367 (SYKALRR). A helical transmembrane segment spans residues 368-388 (GSANMDVLIALGTNAAYFYSL). Residues 389 to 406 (YTVLRAATSPDFKGVDFF) are Extracellular-facing. A helical membrane pass occupies residues 407–427 (ETSAMLISFIILGKYLEVMAK). The Cytoplasmic segment spans residues 428–561 (GKTSQAIAKL…KAPVQKLADR (134 aa)). A helical membrane pass occupies residues 562–584 (ISKFFVPLVIFLSFSTWLAWFLA). The Extracellular portion of the chain corresponds to 585 to 605 (GKLHWYPESWIPSSMDSFELA). Residues 606–623 (LQFGISVMVIACPCALGL) form a helical membrane-spanning segment. Over 624–920 (ATPTAVMVGT…DLSRKTFSRI (297 aa)) the chain is Cytoplasmic. Aspartate 661 serves as the catalytic 4-aspartylphosphate intermediate. 2 residues coordinate Mg(2+): aspartate 866 and aspartate 870. A helical transmembrane segment spans residues 921–940 (RLNYVWALGYNLMGIPIAAG). At 941-952 (VLFPGTRFRLPP) the chain is on the extracellular side. Residues 953–971 (WIAGAAMAASSVSVVCCSL) traverse the membrane as a helical segment. At 972 to 995 (LLKNYKRPKKLDHLEIREIQVERV) the chain is on the cytoplasmic side.

The protein belongs to the cation transport ATPase (P-type) (TC 3.A.3) family. Type IB subfamily. As to quaternary structure, interacts with ATX1. Expressed in roots and flowers.

Its subcellular location is the membrane. It catalyses the reaction Cu(+)(in) + ATP + H2O = Cu(+)(out) + ADP + phosphate + H(+). Its function is as follows. Involved in copper import into the cell. May play a role in copper detoxification in roots. This Arabidopsis thaliana (Mouse-ear cress) protein is Probable copper-transporting ATPase HMA5 (HMA5).